The primary structure comprises 332 residues: Biotin synthase (332 aa).

Residues 53–282 (HFGKKVKLNM…TKEIRISGGR (230 aa)) enclose the Radical SAM core domain. [4Fe-4S] cluster contacts are provided by C71, C75, and C78. Residues C115, C147, C207, and R277 each coordinate [2Fe-2S] cluster.

Belongs to the radical SAM superfamily. Biotin synthase family. In terms of assembly, homodimer. It depends on [4Fe-4S] cluster as a cofactor. [2Fe-2S] cluster is required as a cofactor.

It catalyses the reaction (4R,5S)-dethiobiotin + (sulfur carrier)-SH + 2 reduced [2Fe-2S]-[ferredoxin] + 2 S-adenosyl-L-methionine = (sulfur carrier)-H + biotin + 2 5'-deoxyadenosine + 2 L-methionine + 2 oxidized [2Fe-2S]-[ferredoxin]. It functions in the pathway cofactor biosynthesis; biotin biosynthesis; biotin from 7,8-diaminononanoate: step 2/2. In terms of biological role, catalyzes the conversion of dethiobiotin (DTB) to biotin by the insertion of a sulfur atom into dethiobiotin via a radical-based mechanism. The sequence is that of Biotin synthase from Bacillus mycoides (strain KBAB4) (Bacillus weihenstephanensis).